We begin with the raw amino-acid sequence, 138 residues long: Phosphoribosyl-AMP cyclohydrolase (138 aa).

D84 contributes to the Mg(2+) binding site. C85 serves as a coordination point for Zn(2+). Mg(2+) is bound by residues D86 and D88. The Zn(2+) site is built by C102 and C109.

This sequence belongs to the PRA-CH family. In terms of assembly, homodimer. The cofactor is Mg(2+). It depends on Zn(2+) as a cofactor.

The protein localises to the cytoplasm. It carries out the reaction 1-(5-phospho-beta-D-ribosyl)-5'-AMP + H2O = 1-(5-phospho-beta-D-ribosyl)-5-[(5-phospho-beta-D-ribosylamino)methylideneamino]imidazole-4-carboxamide. It participates in amino-acid biosynthesis; L-histidine biosynthesis; L-histidine from 5-phospho-alpha-D-ribose 1-diphosphate: step 3/9. Its function is as follows. Catalyzes the hydrolysis of the adenine ring of phosphoribosyl-AMP. The polypeptide is Phosphoribosyl-AMP cyclohydrolase (Burkholderia ambifaria (strain ATCC BAA-244 / DSM 16087 / CCUG 44356 / LMG 19182 / AMMD) (Burkholderia cepacia (strain AMMD))).